Reading from the N-terminus, the 764-residue chain is 5-methyltetrahydropteroyltriglutamate--homocysteine methyltransferase (764 aa).

5-methyltetrahydropteroyltri-L-glutamate-binding positions include 17–20 (RELK) and K117. Residues 437 to 439 (IGS) and E490 contribute to the L-homocysteine site. Residues 437 to 439 (IGS) and E490 contribute to the L-methionine site. Residues 521–522 (RC) and W567 contribute to the 5-methyltetrahydropteroyltri-L-glutamate site. Residue D605 participates in L-homocysteine binding. D605 serves as a coordination point for L-methionine. A 5-methyltetrahydropteroyltri-L-glutamate-binding site is contributed by E611. The Zn(2+) site is built by H647, C649, and E671. Catalysis depends on H701, which acts as the Proton donor. Zn(2+) is bound at residue C733.

This sequence belongs to the vitamin-B12 independent methionine synthase family. Zn(2+) is required as a cofactor.

It carries out the reaction 5-methyltetrahydropteroyltri-L-glutamate + L-homocysteine = tetrahydropteroyltri-L-glutamate + L-methionine. It functions in the pathway amino-acid biosynthesis; L-methionine biosynthesis via de novo pathway; L-methionine from L-homocysteine (MetE route): step 1/1. Functionally, catalyzes the transfer of a methyl group from 5-methyltetrahydrofolate to homocysteine resulting in methionine formation. In Blochmanniella pennsylvanica (strain BPEN), this protein is 5-methyltetrahydropteroyltriglutamate--homocysteine methyltransferase.